Reading from the N-terminus, the 429-residue chain is BURP domain-containing protein 3 (429 aa).

The N-terminal stretch at methionine 1–alanine 21 is a signal peptide. The tract at residues glycine 59–glycine 81 is disordered. The BURP domain maps to phenylalanine 213 to serine 428.

In terms of tissue distribution, expressed in stems, leaves, shoot, panicles and stamen.

In Oryza sativa subsp. japonica (Rice), this protein is BURP domain-containing protein 3 (BURP3).